The following is a 154-amino-acid chain: Putative antiporter subunit mnhG2 (154 aa).

Transmembrane regions (helical) follow at residues 11–31 (IASILIFLGSIIALISAIGIV), 51–71 (VLLTVVGVLIYFIVNSGFFSV), and 72–92 (RLLLSLVFINLTSPVGMHLIS).

This sequence belongs to the CPA3 antiporters (TC 2.A.63) subunit G family. In terms of assembly, may form a heterooligomeric complex that consists of seven subunits: mnhA2, mnhB2, mnhC2, mnhD2, mnhE2, mnhF2 and mnhG2.

Its subcellular location is the cell membrane. In Staphylococcus epidermidis (strain ATCC 35984 / DSM 28319 / BCRC 17069 / CCUG 31568 / BM 3577 / RP62A), this protein is Putative antiporter subunit mnhG2 (mnhG2).